We begin with the raw amino-acid sequence, 337 residues long: Serpentine receptor class beta-6 (337 aa).

The next 7 helical transmembrane spans lie at 20–40, 62–82, 98–118, 138–158, 183–203, 234–254, and 273–293; these read QFYT…LIIF, ILIS…IPFL, IFQN…LGIT, IGVF…YFFF, WLCY…YFLV, TFIS…TLII, and GVYI…CVIL.

Belongs to the nematode receptor-like protein srb family. As to expression, expressed in the ADL, ADF and ASH chemosensory neurons in the head and in the PHA and PHB chemosensory neurons in the tail. Low expression also observed in the egg-laying structures in the mid-body region.

Its subcellular location is the cell membrane. In terms of biological role, mediates recognition and avoidance of Streptomyces species by detecting dodecanoic acid secreted by the bacteria. Also mediates avoidance of decanoic acid which is not secreted by Streptomyces species but this may represent an additional important avoidance response in the environment. This chain is Serpentine receptor class beta-6 (srb-6), found in Caenorhabditis elegans.